The sequence spans 515 residues: G-protein coupled receptor 176 (515 aa).

Polar residues predominate over residues 1–16 (MGHNGSWISPNASEPH). A disordered region spans residues 1–20 (MGHNGSWISPNASEPHNASG). Residues 1-42 (MGHNGSWISPNASEPHNASGAEAAGVNRSALGEFGEAQLYRQ) lie on the Extracellular side of the membrane. Residues Asn-4, Asn-11, Asn-17, and Asn-27 are each glycosylated (N-linked (GlcNAc...) asparagine). Residues 43-63 (FTTTVQVVIFIGSLLGNFMVL) traverse the membrane as a helical segment. Over 64–82 (WSTCRTTVFKSVTNRFIKN) the chain is Cytoplasmic. The helical transmembrane segment at 83–103 (LACSGICASLVCVPFDIILST) threads the bilayer. Residues 104 to 118 (SPHCCWWIYTMLFCK) lie on the Extracellular side of the membrane. A helical membrane pass occupies residues 119–139 (VVKFLHKVFCSVTILSFPAIA). At 140 to 160 (LDRYYSVLYPLERKISDAKSR) the chain is on the cytoplasmic side. A helical membrane pass occupies residues 161-181 (ELVMYIWAHAVVASVPVFAVT). At 182-207 (NVADIYATSTCTEVWSNSLGHLVYVL) the chain is on the extracellular side. A helical membrane pass occupies residues 208-228 (VYNITTVIVPVVVVFLFLILI). Over 229-267 (RRALSASQKKKVIIAALRTPQNTISIPYASQREAELHAT) the chain is Cytoplasmic. Residues 268-288 (LLSMVMVFILCSVPYATLVVY) traverse the membrane as a helical segment. Residues 289 to 299 (QTVLNVPDTSV) lie on the Extracellular side of the membrane. The chain crosses the membrane as a helical span at residues 300-320 (FLLLTAVWLPKVSLLANPVLF). The Cytoplasmic segment spans residues 321 to 515 (LTVNKSVRKC…KVSIFPKVDS (195 aa)).

Belongs to the G-protein coupled receptor 1 family.

The protein localises to the cell membrane. Orphan receptor involved in normal circadian rhythm behavior. Acts through the G-protein subclass G(z)-alpha and has an agonist-independent basal activity to repress cAMP production. The polypeptide is G-protein coupled receptor 176 (GPR176) (Homo sapiens (Human)).